The following is a 125-amino-acid chain: Putative iron-sulfur cluster insertion protein ErpA 2 (125 aa).

The iron-sulfur cluster site is built by C53, C117, and C119.

The protein belongs to the HesB/IscA family. Homodimer. Requires iron-sulfur cluster as cofactor.

Its function is as follows. Required for insertion of 4Fe-4S clusters. The sequence is that of Putative iron-sulfur cluster insertion protein ErpA 2 from Polaromonas naphthalenivorans (strain CJ2).